Consider the following 315-residue polypeptide: DNA-directed RNA polymerase subunit alpha (315 aa).

The tract at residues 1-228 (MLEIEKPKIE…EHFKLFMTLT (228 aa)) is alpha N-terminal domain (alpha-NTD). The segment at 245-315 (KEKVLEMAIE…LGLSLKQNED (71 aa)) is alpha C-terminal domain (alpha-CTD).

This sequence belongs to the RNA polymerase alpha chain family. In terms of assembly, homodimer. The RNAP catalytic core consists of 2 alpha, 1 beta, 1 beta' and 1 omega subunit. When a sigma factor is associated with the core the holoenzyme is formed, which can initiate transcription.

It carries out the reaction RNA(n) + a ribonucleoside 5'-triphosphate = RNA(n+1) + diphosphate. Functionally, DNA-dependent RNA polymerase catalyzes the transcription of DNA into RNA using the four ribonucleoside triphosphates as substrates. The polypeptide is DNA-directed RNA polymerase subunit alpha (Clostridium kluyveri (strain NBRC 12016)).